Consider the following 530-residue polypeptide: Arginine-containing cyclodipeptide synthase pthA (530 aa).

The short motif at 419–423 (DDRAE) is the Conserved DDXXE motif element.

It belongs to the arginine-containing cyclodipeptide synthase family.

It catalyses the reaction L-aspartyl-tRNA(Asp) + L-arginyl-tRNA(Arg) = cyclo(L-arginyl-L-aspartyl) + tRNA(Asp) + tRNA(Arg) + 2 H(+). Its pathway is secondary metabolite biosynthesis. Arginine-containing cyclodipeptide synthase; part of the cluster that mediates the biosynthesis of a highly modified cyclo-arginine-aspartate dipeptide (cRD). Within the pathway, pthA acts as the scaffold-generating enzyme and is responsible for formation of the cyclo-Arg-Asp diketopiperazine (cRW) from L-arginyl-tRNA(Arg) + L-aspartyl-tRNA(Asp). Additional enzymes from the cluster then further modify the cyclo-Arg-Asp diketopiperazine (cRW) scaffold. The protein is Arginine-containing cyclodipeptide synthase pthA of Penicillium thymicola.